We begin with the raw amino-acid sequence, 102 residues long: Small ribosomal subunit protein uS10 (102 aa).

This sequence belongs to the universal ribosomal protein uS10 family. As to quaternary structure, part of the 30S ribosomal subunit.

Involved in the binding of tRNA to the ribosomes. The protein is Small ribosomal subunit protein uS10 of Pediococcus pentosaceus (strain ATCC 25745 / CCUG 21536 / LMG 10740 / 183-1w).